Reading from the N-terminus, the 297-residue chain is Calponin-1 (297 aa).

Residues 28 to 131 (HQREQELREW…STLLALASMA (104 aa)) enclose the Calponin-homology (CH) domain. Calponin-like repeat units follow at residues 164–189 (IGLQ…RHLY), 204–229 (ISLQ…RQIF), and 243–268 (VSLQ…RQVY). A Phosphothreonine; by ROCK2 modification is found at threonine 170. A Phosphoserine; by ROCK2 modification is found at serine 175. Threonine 180 and threonine 184 each carry phosphothreonine; by ROCK2. The residue at position 259 (threonine 259) is a Phosphothreonine; by ROCK2.

Belongs to the calponin family. Part of cGMP kinase signaling complex at least composed of ACTA2/alpha-actin, CNN1/calponin H1, PLN/phospholamban, PRKG1 and ITPR1.

Thin filament-associated protein that is implicated in the regulation and modulation of smooth muscle contraction. It is capable of binding to actin, calmodulin and tropomyosin. The interaction of calponin with actin inhibits the actomyosin Mg-ATPase activity. In Ovis aries (Sheep), this protein is Calponin-1 (CNN1).